A 262-amino-acid chain; its full sequence is Tropinone reductase homolog At2g29310 (262 aa).

Position 13–37 (leucine 13–histidine 37) interacts with NADP(+). Substrate is bound at residue serine 146. Tyrosine 159 (proton acceptor) is an active-site residue.

It belongs to the short-chain dehydrogenases/reductases (SDR) family. SDR65C subfamily.

The chain is Tropinone reductase homolog At2g29310 from Arabidopsis thaliana (Mouse-ear cress).